We begin with the raw amino-acid sequence, 260 residues long: ELL-associated factor 2 (260 aa).

The segment at 17 to 104 is necessary for interaction with ELL; it reads LKLGESFEKQ…TGECRLEKLS (88 aa). Over residues 116 to 126 the composition is skewed to basic and acidic residues; that stretch reads GSSKIQYRKEQ. 2 disordered regions span residues 116 to 154 and 170 to 234; these read GSSK…SPAS and MDQM…HNRF. 3 positions are modified to phosphoserine: Ser-146, Ser-151, and Ser-154. Residues 174–192 show a composition bias toward low complexity; the sequence is SSCDSSSDSKSSSSSSSED. The necessary for transactivation activity stretch occupies residues 177-260; that stretch reads DSSSDSKSSS…LSESGSDSDD (84 aa). Over residues 225–234 the composition is skewed to basic and acidic residues; that stretch reads PDIDASHNRF. The interval 246–260 is necessary for interaction with TCEA1 and transactivation activity; the sequence is RNDLQLSESGSDSDD.

This sequence belongs to the EAF family. In terms of assembly, isoform 1 and isoform 2 interact with TCEA1. Component of the super elongation complex (SEC), at least composed of EAF1, EAF2, CDK9, MLLT3/AF9, AFF (AFF1 or AFF4), the P-TEFb complex and ELL (ELL, ELL2 or ELL3). Interacts with ELL and ELL2. As to expression, expressed in heart, brain, placenta, lung, skeletal muscle, kidney, pancreas, spleen, prostate, testis, small intestine, colon, adrenal, bone marrow, lymph node, spinal gland, stomach, thyroid, trachea, thymus, liver and leukocytes.

Its subcellular location is the nucleus speckle. Its function is as follows. Acts as a transcriptional transactivator of TCEA1 elongation activity. Acts as a transcriptional transactivator of ELL and ELL2 elongation activities. Potent inducer of apoptosis in prostatic and non-prostatic cell lines. Inhibits prostate tumor growth in vivo. In Homo sapiens (Human), this protein is ELL-associated factor 2 (EAF2).